The sequence spans 702 residues: MESPSAPPHRWCIPWQRLLLTASLLTFWNPPTTAKLTIESTPFNVAEGKEVLLLVHNLPQHLFGYSWYKGERVDGNRQIIGYVIGTQQATPGPAYSGREIIYPNASLLIQNIIQNDTGFYTLHVIKSDLVNEEATGQFRVYPELPKPSISSNNSKPVEDKDAVAFTCEPETQDATYLWWVNNQSLPVSPRLQLSNGNRTLTLFNVTRNDTASYKCETQNPVSARRSDSVILNVLYGPDAPTISPLNTSYRSGENLNLSCHAASNPPAQYSWFVNGTFQQSTQELFIPNITVNNSGSYTCQAHNSDTGLNRTTVTTITVYAEPPKPFITSNNSNPVEDEDAVALTCEPEIQNTTYLWWVNNQSLPVSPRLQLSNDNRTLTLLSVTRNDVGPYECGIQNELSVDHSDPVILNVLYGPDDPTISPSYTYYRPGVNLSLSCHAASNPPAQYSWLIDGNIQQHTQELFISNITEKNSGLYTCQANNSASGHSRTTVKTITVSAELPKPSISSNNSKPVEDKDAVAFTCEPEAQNTTYLWWVNGQSLPVSPRLQLSNGNRTLTLFNVTRNDARAYVCGIQNSVSANRSDPVTLDVLYGPDTPIISPPDSSYLSGANLNLSCHSASNPSPQYSWRINGIPQQHTQVLFIAKITPNNNGTYACFVSNLATGRNNSIVKSITVSASGTSPGLSAGATVGIMIGVLVGVALI.

Residues 1–34 form the signal peptide; it reads MESPSAPPHRWCIPWQRLLLTASLLTFWNPPTTA. Residues 35–144 form the Ig-like V-type domain; it reads KLTIESTPFN…TGQFRVYPEL (110 aa). N-linked (GlcNAc...) asparagine glycans are attached at residues Asn-104, Asn-115, Asn-152, Asn-182, Asn-197, Asn-204, Asn-208, Asn-246, Asn-256, Asn-274, Asn-288, Asn-292, Asn-309, Asn-330, Asn-351, Asn-360, Asn-375, Asn-432, Asn-466, Asn-480, Asn-508, Asn-529, Asn-553, Asn-560, Asn-580, Asn-612, Asn-650, and Asn-665. 6 consecutive Ig-like C2-type domains span residues 145-232, 240-315, 323-410, 418-495, 501-588, and 593-675; these read PKPS…VILN, PTIS…TVTT, PKPF…VILN, PTIS…KTIT, PKPS…VTLD, and PDTP…ITVS. A disulfide bond links Cys-167 and Cys-215. Cysteines 259 and 299 form a disulfide. Cys-345 and Cys-393 are joined by a disulfide. The cysteines at positions 437 and 477 are disulfide-linked. The cysteines at positions 523 and 571 are disulfide-linked. Residues Cys-615 and Cys-655 are joined by a disulfide bond. Ala-685 carries the GPI-anchor amidated alanine lipid modification. Residues 686 to 702 constitute a propeptide, removed in mature form; it reads GATVGIMIGVLVGVALI.

Belongs to the immunoglobulin superfamily. CEA family. As to quaternary structure, homodimer. Complex immunoreactive glycoprotein with a MW of 180 kDa comprising 60% carbohydrate. In terms of tissue distribution, expressed in columnar epithelial and goblet cells of the colon (at protein level). Found in adenocarcinomas of endodermally derived digestive system epithelium and fetal colon.

The protein resides in the cell membrane. It localises to the apical cell membrane. It is found in the cell surface. Functionally, cell surface glycoprotein that plays a role in cell adhesion, intracellular signaling and tumor progression. Mediates homophilic and heterophilic cell adhesion with other carcinoembryonic antigen-related cell adhesion molecules, such as CEACAM6. Plays a role as an oncogene by promoting tumor progression; induces resistance to anoikis of colorectal carcinoma cells. Its function is as follows. (Microbial infection) Receptor for E.coli Dr adhesins. Binding of E.coli Dr adhesins leads to dissociation of the homodimer. The chain is Cell adhesion molecule CEACAM5 from Homo sapiens (Human).